The primary structure comprises 326 residues: Putative ribose-phosphate pyrophosphokinase 2 (326 aa).

ATP contacts are provided by residues 43 to 45 (DGE) and 102 to 103 (RQ). His-136 lines the Mg(2+) pocket. Residues Asp-225 and 229–233 (NTGKT) each bind D-ribose 5-phosphate.

In terms of assembly, homohexamer. Mg(2+) is required as a cofactor.

Its subcellular location is the cytoplasm. It carries out the reaction D-ribose 5-phosphate + ATP = 5-phospho-alpha-D-ribose 1-diphosphate + AMP + H(+). Its pathway is metabolic intermediate biosynthesis; 5-phospho-alpha-D-ribose 1-diphosphate biosynthesis; 5-phospho-alpha-D-ribose 1-diphosphate from D-ribose 5-phosphate (route I): step 1/1. Involved in the biosynthesis of the central metabolite phospho-alpha-D-ribosyl-1-pyrophosphate (PRPP) via the transfer of pyrophosphoryl group from ATP to 1-hydroxyl of ribose-5-phosphate (Rib-5-P). The sequence is that of Putative ribose-phosphate pyrophosphokinase 2 from Streptococcus pyogenes serotype M6 (strain ATCC BAA-946 / MGAS10394).